Consider the following 227-residue polypeptide: PKHD-type hydroxylase Mfla_2317 (227 aa).

Residues 78–178 (KVFPPLFNRY…RVSSFFWMQS (101 aa)) enclose the Fe2OG dioxygenase domain. The Fe cation site is built by His-96, Asp-98, and His-159. Arg-169 contacts 2-oxoglutarate.

It depends on Fe(2+) as a cofactor. Requires L-ascorbate as cofactor.

In Methylobacillus flagellatus (strain ATCC 51484 / DSM 6875 / VKM B-1610 / KT), this protein is PKHD-type hydroxylase Mfla_2317.